Here is a 338-residue protein sequence, read N- to C-terminus: Selenocysteine methyltransferase (338 aa).

A Hcy-binding domain is found at 1–327 (MSSPLITDFL…DTIRGIYKIL (327 aa)). Residues cysteine 245, cysteine 312, and cysteine 313 each coordinate Zn(2+).

As to quaternary structure, monomer. Requires Zn(2+) as cofactor. In terms of tissue distribution, present in all tissues tested.

It catalyses the reaction S-methyl-L-methionine + L-selenocysteine = Se-methyl-L-selenocysteine + L-methionine + H(+). Its function is as follows. Catalyzes the methylation of selenocysteine with S-methylmethionine as donor. Does not methylate cysteine. The polypeptide is Selenocysteine methyltransferase (SMTA) (Astragalus bisulcatus (Two-grooved milkvetch)).